Here is a 1364-residue protein sequence, read N- to C-terminus: Formin-like protein 6 (1364 aa).

The 185-residue stretch at 9–193 folds into the Phosphatase tensin-type domain; the sequence is YRKPPDGLLE…HYISRRNVSA (185 aa). Cys126 functions as the Phosphocysteine intermediate in the catalytic mechanism. A C2 tensin-type domain is found at 199–338; it reads DRALTLDCVI…FRAEVLFSEM (140 aa). Disordered stretches follow at residues 614–934, 976–999, and 1317–1364; these read KCTP…NLKP, VLPS…KPEK, and EAEA…ASAK. Residues 617-631 are compositionally biased toward pro residues; the sequence is PSPPPLLPPLAPVVP. The segment covering 657-690 has biased composition (polar residues); sequence SFPSLSPTQQKQSTSKLCQTILPTNHQLSSSNIT. Positions 734–743 are enriched in pro residues; sequence PPAPPPPPLQ. The span at 744-757 shows a compositional bias: low complexity; that stretch reads SPSTPRCSPVRTLA. Pro residues-rich tracts occupy residues 774–813 and 856–865; these read GPPP…PAAP and PSPPPPPPPC. Residues 916–929 are compositionally biased toward polar residues; sequence MSRSLQSGQAASRR. In terms of domain architecture, FH2 spans 922-1322; that stretch reads SGQAASRRSN…KALKEAEAEK (401 aa). Positions 1317–1351 are enriched in basic and acidic residues; that stretch reads EAEAEKTKKEPENAQKTKEPGNDKAKHNNSIKELD. Positions 1353-1364 are enriched in polar residues; that stretch reads SLQSPAQTASAK.

The protein belongs to the formin-like family. Class-II subfamily.

This is Formin-like protein 6 (FH6) from Oryza sativa subsp. japonica (Rice).